The sequence spans 285 residues: AT-hook motif nuclear-localized protein 21 (285 aa).

Positions 17–95 are disordered; the sequence is DGGGGGQFTT…GSKNKPKPPV (79 aa). Residues 39-50 are compositionally biased toward basic residues; it reads NHHHHHHNHNHH. A compositionally biased stretch (gly residues) spans 63–73; it reads GLGGGGGGGSG. A DNA-binding region (a.T hook) is located at residues 78-90; sequence RRPRGRPAGSKNK. Positions 102–238 constitute a PPC domain; sequence ANTLRAHILE…EHEEHLQSGG (137 aa).

Preferentially expressed in roots, but also in flowers and leaves. Detected in the inflorescence meristem, floral primordia and developing reproductive organs.

The protein localises to the nucleus. Its subcellular location is the nucleoplasm. Its function is as follows. Transcription factor that specifically binds AT-rich DNA sequences related to the nuclear matrix attachment regions (MARs). Binds to the MARs present in the ETTIN (ETT) promoter leading to a negative regulation of its gene expression. Functions as a molecular node downstream of the homeotic protein AGAMOUS (AG), regulating patterning and differentiation of reproductive organs. Acts as a chromatin remodeling factor that modifies the architecture of ETTIN (ETT) chromatin by modulating H3 methylation leading to the regulation of ETT expression. Seems to be involved in the regulation of a set of reproductives genes including CRABS CLAW (CRC), JAGGED (JAG) and KNUCKLES (KNU). The chain is AT-hook motif nuclear-localized protein 21 from Arabidopsis thaliana (Mouse-ear cress).